The sequence spans 700 residues: Methionine--tRNA ligase (700 aa).

The 'HIGH' region motif lies at 14 to 24 (PYANGPVHLGH). Residues Cys-146, Cys-149, Cys-159, and Cys-162 each contribute to the Zn(2+) site. The 'KMSKS' region motif lies at 343 to 347 (KFSKS). Residue Lys-346 participates in ATP binding. The region spanning 599–700 (EFEKIDLRVA…GDSIVGKPVK (102 aa)) is the tRNA-binding domain.

Belongs to the class-I aminoacyl-tRNA synthetase family. MetG type 1 subfamily. In terms of assembly, homodimer. The cofactor is Zn(2+).

It is found in the cytoplasm. The enzyme catalyses tRNA(Met) + L-methionine + ATP = L-methionyl-tRNA(Met) + AMP + diphosphate. In terms of biological role, is required not only for elongation of protein synthesis but also for the initiation of all mRNA translation through initiator tRNA(fMet) aminoacylation. This is Methionine--tRNA ligase from Chloroherpeton thalassium (strain ATCC 35110 / GB-78).